The sequence spans 513 residues: Xylose import ATP-binding protein XylG (513 aa).

ABC transporter domains are found at residues 5 to 242 (LEMK…VGRE) and 259 to 505 (LRIE…LRSE). 37–44 (GENGSGKS) is an ATP binding site.

This sequence belongs to the ABC transporter superfamily. Xylose importer (TC 3.A.1.2.4) family. As to quaternary structure, the complex is composed of two ATP-binding proteins (XylG), two transmembrane proteins (XylH) and a solute-binding protein (XylF).

The protein localises to the cell inner membrane. The enzyme catalyses D-xylose(out) + ATP + H2O = D-xylose(in) + ADP + phosphate + H(+). Part of the ABC transporter complex XylFGH involved in xylose import. Responsible for energy coupling to the transport system. The chain is Xylose import ATP-binding protein XylG from Escherichia coli O6:K15:H31 (strain 536 / UPEC).